Here is a 1228-residue protein sequence, read N- to C-terminus: Membrane-anchored lipid-binding protein LAM1 (1228 aa).

At 1–1062 (MHEHKAELRL…IFKCFSKVNK (1062 aa)) the chain is on the cytoplasmic side. The PH domain maps to 308 to 421 (EKGLSGWLYM…WINTLTSHKR (114 aa)). The VASt domain occupies 773–978 (EAWCYFQDNF…KTREYLKKFN (206 aa)). The helical transmembrane segment at 1063 to 1083 (TLYYCLLISAVTNLFFVGKSI) threads the bilayer. The Lumenal portion of the chain corresponds to 1084 to 1228 (HSYFSVKSAE…EYNRLSAIPV (145 aa)). Asparagine 1205 carries an N-linked (GlcNAc...) asparagine glycan.

The protein belongs to the SIP3 family.

It is found in the mitochondrion membrane. Its subcellular location is the endoplasmic reticulum membrane. Involved in mitochondrial fragmentation during programmed cell death in response to high levels of alpha-factor mating pheromone or the drug amiodarone. May be involved in sterol transfer between intracellular membranes. In Saccharomyces cerevisiae (strain ATCC 204508 / S288c) (Baker's yeast), this protein is Membrane-anchored lipid-binding protein LAM1.